The primary structure comprises 416 residues: 3-oxoacyl-[acyl-carrier-protein] synthase 1 (416 aa).

In terms of domain architecture, Ketosynthase family 3 (KS3) spans 11–415 (FPSVVVTAVT…GHNVALAFGR (405 aa)). Catalysis depends on for beta-ketoacyl synthase activity residues C171, H311, and H345. Positions 311 and 345 each coordinate substrate.

Belongs to the thiolase-like superfamily. Beta-ketoacyl-ACP synthases family.

It localises to the cytoplasm. The enzyme catalyses an ultra-long-chain mono-unsaturated fatty acyl-[ACP] + malonyl-[ACP] + H(+) = a 3-oxo-ultra-long-chain mono-unsaturated fatty acyl-[ACP] + holo-[ACP] + CO2. It participates in lipid metabolism; mycolic acid biosynthesis. Functionally, part of the mycobacterial fatty acid elongation system FAS-II, which is involved in mycolic acid biosynthesis. Catalyzes the elongation of long chain acyl-ACP substrates by the addition of two carbons from malonyl-ACP to an acyl acceptor. Involved in the initial extension of the mycolate chain and forms monounsaturated fatty acids that averaged 40 carbons in length. This Mycobacterium tuberculosis (strain ATCC 35801 / TMC 107 / Erdman) protein is 3-oxoacyl-[acyl-carrier-protein] synthase 1 (kasA).